Reading from the N-terminus, the 251-residue chain is Putative glutathione-independent glyoxalase hsp3105 (251 aa).

This sequence belongs to the peptidase C56 family. HSP31-like subfamily.

The protein resides in the cytoplasm. It localises to the nucleus. The enzyme catalyses methylglyoxal + H2O = (R)-lactate + H(+). In terms of biological role, may catalyze the conversion of methylglyoxal (MG) to D-lactate in a single glutathione (GSH)-independent step. May play a role in detoxifying endogenously produced glyoxals. Involved in protection against reactive oxygen species (ROS). The protein is Putative glutathione-independent glyoxalase hsp3105 of Schizosaccharomyces pombe (strain 972 / ATCC 24843) (Fission yeast).